The following is a 695-amino-acid chain: Elongation factor G 2 (695 aa).

Residues 5-280 enclose the tr-type G domain; it reads SKYRNIGIFA…AVVDYLPSPT (276 aa). Residues 14–21, 78–82, and 132–135 each bind GTP; these read AHVDAGKT, DTPGH, and NKLD.

It belongs to the TRAFAC class translation factor GTPase superfamily. Classic translation factor GTPase family. EF-G/EF-2 subfamily.

The protein localises to the cytoplasm. Its function is as follows. Catalyzes the GTP-dependent ribosomal translocation step during translation elongation. During this step, the ribosome changes from the pre-translocational (PRE) to the post-translocational (POST) state as the newly formed A-site-bound peptidyl-tRNA and P-site-bound deacylated tRNA move to the P and E sites, respectively. Catalyzes the coordinated movement of the two tRNA molecules, the mRNA and conformational changes in the ribosome. This Photobacterium profundum (strain SS9) protein is Elongation factor G 2.